Here is a 151-residue protein sequence, read N- to C-terminus: RNA polymerase-binding transcription factor DksA (151 aa).

A coiled-coil region spans residues 34 to 54 (EAQLSHFKRILEAWRNQLRDE). The Zn(2+) site is built by cysteine 114, cysteine 117, cysteine 135, and cysteine 138. Residues 114-138 (CESCGVEIGIRRLEARPTADLCIDC) form a dksA C4-type zinc finger.

Belongs to the DksA family. Interacts directly with the RNA polymerase.

It localises to the cytoplasm. Functionally, transcription factor that acts by binding directly to the RNA polymerase (RNAP). Required for negative regulation of rRNA expression and positive regulation of several amino acid biosynthesis promoters. Also required for regulation of fis expression. The chain is RNA polymerase-binding transcription factor DksA from Salmonella typhi.